Reading from the N-terminus, the 158-residue chain is Mitotic-spindle organizing protein 2B (158 aa).

S34 is subject to Phosphoserine. The tract at residues 84 to 158 (RLASEPQDPA…PGKSPTRGST (75 aa)) is disordered. Residues 111–122 (GSAALGGALALA) show a composition bias toward low complexity. Polar residues predominate over residues 128–140 (EGSSQRMPRQPSA). A Phosphoserine modification is found at S152.

The protein belongs to the MOZART2 family. As to quaternary structure, associates with the gamma-tubulin ring complex (gTuRC) consisting of TUBGCP2, TUBGCP3, TUBGCP4, TUBGCP5 and TUBGCP6 and gamma-tubulin TUBG1 or TUBG2; within the complex, interacts with TUBGCP2; the interaction plays a role in gTuRC activation. Interacts with TUBG1.

It localises to the cytoplasm. The protein resides in the cytoskeleton. The protein localises to the microtubule organizing center. Its subcellular location is the centrosome. It is found in the spindle. Functionally, required for the recruitment and the assembly of the gamma-tubulin ring complex (gTuRC) at the centrosome. The gTuRC regulates the minus-end nucleation of alpha-beta tubulin heterodimers that grow into microtubule protafilaments, a critical step in centrosome duplication and spindle formation. This is Mitotic-spindle organizing protein 2B (MZT2B) from Homo sapiens (Human).